Consider the following 215-residue polypeptide: Large ribosomal subunit protein uL4 (215 aa).

The tract at residues 46–76 (TAKSKNRAEVSGGGRKPWAQKGGGRARAGSI) is disordered. A compositionally biased stretch (gly residues) spans 56 to 71 (SGGGRKPWAQKGGGRA).

It belongs to the universal ribosomal protein uL4 family. Part of the 50S ribosomal subunit.

Functionally, one of the primary rRNA binding proteins, this protein initially binds near the 5'-end of the 23S rRNA. It is important during the early stages of 50S assembly. It makes multiple contacts with different domains of the 23S rRNA in the assembled 50S subunit and ribosome. In terms of biological role, forms part of the polypeptide exit tunnel. In Helicobacter pylori (strain HPAG1), this protein is Large ribosomal subunit protein uL4.